The following is a 253-amino-acid chain: 5-oxoprolinase subunit A (253 aa).

The protein belongs to the LamB/PxpA family. Forms a complex composed of PxpA, PxpB and PxpC.

The catalysed reaction is 5-oxo-L-proline + ATP + 2 H2O = L-glutamate + ADP + phosphate + H(+). In terms of biological role, catalyzes the cleavage of 5-oxoproline to form L-glutamate coupled to the hydrolysis of ATP to ADP and inorganic phosphate. The sequence is that of 5-oxoprolinase subunit A from Ruegeria pomeroyi (strain ATCC 700808 / DSM 15171 / DSS-3) (Silicibacter pomeroyi).